We begin with the raw amino-acid sequence, 330 residues long: Glycerol-3-phosphate dehydrogenase [NAD(P)+] (330 aa).

Positions 11, 12, 32, and 106 each coordinate NADPH. Sn-glycerol 3-phosphate contacts are provided by Lys-106, Gly-133, and Ser-135. Ala-137 serves as a coordination point for NADPH. Residues Lys-188, Asp-241, Ser-251, Arg-252, and Asn-253 each contribute to the sn-glycerol 3-phosphate site. Lys-188 acts as the Proton acceptor in catalysis. Arg-252 is a binding site for NADPH. 2 residues coordinate NADPH: Val-276 and Glu-278.

Belongs to the NAD-dependent glycerol-3-phosphate dehydrogenase family.

The protein resides in the cytoplasm. The catalysed reaction is sn-glycerol 3-phosphate + NAD(+) = dihydroxyacetone phosphate + NADH + H(+). It catalyses the reaction sn-glycerol 3-phosphate + NADP(+) = dihydroxyacetone phosphate + NADPH + H(+). It functions in the pathway membrane lipid metabolism; glycerophospholipid metabolism. Catalyzes the reduction of the glycolytic intermediate dihydroxyacetone phosphate (DHAP) to sn-glycerol 3-phosphate (G3P), the key precursor for phospholipid synthesis. This Clostridium botulinum (strain Alaska E43 / Type E3) protein is Glycerol-3-phosphate dehydrogenase [NAD(P)+].